The following is a 268-amino-acid chain: Nitrite transporter NirC (268 aa).

Over 1–25 (MFTDTINKCAANAARIARLSANNPL) the chain is Cytoplasmic. Residues 26–46 (GFWVSSAMAGAYVGLGIILIF) traverse the membrane as a helical segment. At 47-59 (TLGNLLDPSVRPL) the chain is on the periplasmic side. Residues 60 to 80 (VMGATFGIALTLVIIAGSELF) traverse the membrane as a helical segment. Residues 81-112 (TGHTMFLTFGVKAGSISHGQMWAILPQTWLGN) are Cytoplasmic-facing. Residues 113–133 (LVGSVFVAMLYSWGGGSLLPV) traverse the membrane as a helical segment. Over 134–151 (DTSIVHSVALAKTTAPAM) the chain is Periplasmic. A helical transmembrane segment spans residues 152–172 (VLFFKGALCNWLVCLAIWMAL). Residues 173 to 179 (RTEGAAK) lie on the Cytoplasmic side of the membrane. Residues 180–200 (FIAIWWCLLAFIASGYEHSIA) traverse the membrane as a helical segment. At 201 to 225 (NMTLFALSWFGNHSEAYTLAGIGHN) the chain is on the periplasmic side. Residues 226 to 246 (LLWVTLGNTLSGAVFMGLGYW) form a helical membrane-spanning segment. The Cytoplasmic portion of the chain corresponds to 247–268 (YATPKANRPVADKFNQTETAAG).

The protein belongs to the FNT transporter (TC 1.A.16) family.

The protein localises to the cell inner membrane. Functionally, catalyzes nitrite uptake and nitrite export across the cytoplasmic membrane. Is up to 10-fold more active than NarK or NarU in nitrite uptake for subsequent reduction in the cytoplasm by the NirB/NirD nitrite reductase. This Escherichia coli (strain K12) protein is Nitrite transporter NirC (nirC).